A 303-amino-acid polypeptide reads, in one-letter code: Probable 5-dehydro-4-deoxyglucarate dehydratase (303 aa).

The protein belongs to the DapA family.

The catalysed reaction is 5-dehydro-4-deoxy-D-glucarate + H(+) = 2,5-dioxopentanoate + CO2 + H2O. It functions in the pathway carbohydrate acid metabolism; D-glucarate degradation; 2,5-dioxopentanoate from D-glucarate: step 2/2. This chain is Probable 5-dehydro-4-deoxyglucarate dehydratase, found in Pseudomonas putida (strain W619).